Consider the following 152-residue polypeptide: Mitochondrial fission 1 protein (152 aa).

Position 1 is an N-acetylmethionine (methionine 1). Residues 1 to 122 (MEAVLNELVS…LIDKAMKKDG (122 aa)) are Cytoplasmic-facing. Residue serine 10 is modified to Phosphoserine. One copy of the TPR repeat lies at 71–104 (RDYVFYLAVGNYRLKEYEKALKYVRGLLQTEPQN). The helical transmembrane segment at 123-143 (LVGMAIVGGMALGVAGLAGLI) threads the bilayer. Residues 144 to 152 (GLAVSKSKS) lie on the Mitochondrial intermembrane side of the membrane.

The protein belongs to the FIS1 family. As to quaternary structure, interacts with DNM1L/DLP1 through the TPR region; may form part of a larger protein complex at the endoplasmic reticulum-mitochondrial interface during mitochondrial fission. Interacts with MARCHF5. Interacts with MIEF1. Interacts with PEX11A, PEX11B and PEX11G. In terms of processing, ubiquitinated by MARCHF5.

It localises to the mitochondrion outer membrane. The protein localises to the peroxisome membrane. Involved in the fragmentation of the mitochondrial network and its perinuclear clustering. Plays a minor role in the recruitment and association of the fission mediator dynamin-related protein 1 (DNM1L) to the mitochondrial surface and mitochondrial fission. May not be essential for the assembly of functional fission complexes and the subsequent membrane scission event. Also mediates peroxisomal fission. May act when the products of fission are directed toward mitochondrial homeostasis, mitophagy, or apoptosis. Can induce cytochrome c release from the mitochondrion to the cytosol, ultimately leading to apoptosis. The sequence is that of Mitochondrial fission 1 protein (Fis1) from Mus musculus (Mouse).